Reading from the N-terminus, the 553-residue chain is Phospholipase-B 81 (553 aa).

The signal sequence occupies residues 1 to 35 (MVRFGSAASSDNRRRRCWSWYWGGLLLLWAVAETR). N-linked (GlcNAc...) asparagine glycosylation is found at N69, N313, N416, and N531.

Belongs to the phospholipase B-like family. As to expression, expressed by the venom gland.

The protein resides in the secreted. Functionally, may cause hemolysis. The polypeptide is Phospholipase-B 81 (Drysdalia coronoides (White-lipped snake)).